We begin with the raw amino-acid sequence, 427 residues long: Glutamate-1-semialdehyde 2,1-aminomutase (427 aa).

The residue at position 265 (Lys-265) is an N6-(pyridoxal phosphate)lysine.

It belongs to the class-III pyridoxal-phosphate-dependent aminotransferase family. HemL subfamily. In terms of assembly, homodimer. Requires pyridoxal 5'-phosphate as cofactor.

It localises to the cytoplasm. It catalyses the reaction (S)-4-amino-5-oxopentanoate = 5-aminolevulinate. It functions in the pathway porphyrin-containing compound metabolism; protoporphyrin-IX biosynthesis; 5-aminolevulinate from L-glutamyl-tRNA(Glu): step 2/2. The sequence is that of Glutamate-1-semialdehyde 2,1-aminomutase from Burkholderia pseudomallei (strain 1710b).